A 558-amino-acid chain; its full sequence is Suppressor of zyg-1 protein 20 (558 aa).

The region spanning 45–146 (KVKAEESSGV…ARNRILGTEY (102 aa)) is the SUZ domain. Disordered stretches follow at residues 50–132 (ESSG…ERQA), 205–241 (FTQP…QQSL), and 374–558 (QRNQ…NRPQ). The segment covering 69–81 (EEPKRVFLRRPKD) has biased composition (basic and acidic residues). Residues 94–109 (PPTSADTEEQPVTNVR) are compositionally biased toward polar residues. Over residues 117–131 (NQKEKQPAPTYEERQ) the composition is skewed to basic and acidic residues. 2 stretches are compositionally biased toward low complexity: residues 374-394 (QRNQ…QNRQ) and 424-477 (NNGQ…QQQQ). Composition is skewed to polar residues over residues 478-508 (NKSG…SQNP) and 545-558 (SASQ…NRPQ).

Interacts (via C-terminus) with atx-2 (via C-terminus); the interaction is RNA independent. Interacts with let-92. In terms of processing, phosphorylated. May be dephosphorylated by let-92.

It is found in the cytoplasm. It localises to the cytoskeleton. Its subcellular location is the microtubule organizing center. The protein localises to the centrosome. The protein resides in the centriole. It is found in the nucleus. It localises to the nucleolus. Its subcellular location is the chromosome. In terms of biological role, RNA binding protein that is required for normal cell division and cytokinesis during embryonic development. Functions with RNA-binding protein atx-2 to ensure embryonic cell division, and to this end, plays a role in the regulation of centrosome assembly, position and size, and in astral microtubule outgrowth and nucleation. Furthermore, negatively regulates the levels of the protein kinase zyg-1 at the centrosome. Also involved in ensuring centrosome attachment to the nuclear envelope. The polypeptide is Suppressor of zyg-1 protein 20 (Caenorhabditis elegans).